The primary structure comprises 879 residues: DNA mismatch repair protein MutS (879 aa).

629–636 (GPNMAGKS) provides a ligand contact to ATP.

Belongs to the DNA mismatch repair MutS family.

In terms of biological role, this protein is involved in the repair of mismatches in DNA. It is possible that it carries out the mismatch recognition step. This protein has a weak ATPase activity. This Ruegeria sp. (strain TM1040) (Silicibacter sp.) protein is DNA mismatch repair protein MutS.